The following is a 763-amino-acid chain: Cyclin-F (763 aa).

The Nuclear localization signal 1 motif lies at Lys19 to Arg27. Residues Val28 to Ala75 form the F-box domain. The region spanning Ile299 to Ile411 is the Cyclin N-terminal domain. 2 short sequence motifs (d box) span residues Arg316–Leu319 and Arg355–Leu358. 2 disordered regions span residues Gly574–Leu600 and Lys677–Leu763. The Nuclear localization signal 2 motif lies at Ser575–Arg581. The segment covering Arg580–Gly590 has biased composition (basic and acidic residues). Residues Arg589 to Lys747 form a PEST region. The segment covering Ser692 to Pro710 has biased composition (low complexity). Residues Ala741 to Gln751 show a composition bias toward basic residues.

Belongs to the cyclin family. Cyclin AB subfamily. Component of the SCF(CCNF) complex.

It localises to the nucleus. It is found in the cytoplasm. Its subcellular location is the perinuclear region. The protein localises to the cytoskeleton. The protein resides in the microtubule organizing center. It localises to the centrosome. It is found in the centriole. Substrate recognition component of the SCF(CCNF) E3 ubiquitin-protein ligase complex which mediates the ubiquitination and subsequent proteasomal degradation of target proteins. The SCF(CCNF) E3 ubiquitin-protein ligase complex is an integral component of the ubiquitin proteasome system (UPS) and links proteasome degradation to the cell cycle. Mediates the substrate recognition and the proteasomal degradation of various target proteins during G2 phase involved in the regulation of cell cycle progression and in the maintenance of genome stability. This chain is Cyclin-F (ccnf), found in Xenopus tropicalis (Western clawed frog).